We begin with the raw amino-acid sequence, 495 residues long: Maturase K (495 aa).

It belongs to the intron maturase 2 family. MatK subfamily.

It localises to the plastid. The protein resides in the chloroplast. In terms of biological role, usually encoded in the trnK tRNA gene intron. Probably assists in splicing its own and other chloroplast group II introns. The sequence is that of Maturase K from Torreya californica (California nutmeg).